A 188-amino-acid chain; its full sequence is ATP synthase subunit delta (188 aa).

The protein belongs to the ATPase delta chain family. As to quaternary structure, F-type ATPases have 2 components, F(1) - the catalytic core - and F(0) - the membrane proton channel. F(1) has five subunits: alpha(3), beta(3), gamma(1), delta(1), epsilon(1). F(0) has three main subunits: a(1), b(2) and c(10-14). The alpha and beta chains form an alternating ring which encloses part of the gamma chain. F(1) is attached to F(0) by a central stalk formed by the gamma and epsilon chains, while a peripheral stalk is formed by the delta and b chains.

It is found in the cell inner membrane. Functionally, f(1)F(0) ATP synthase produces ATP from ADP in the presence of a proton or sodium gradient. F-type ATPases consist of two structural domains, F(1) containing the extramembraneous catalytic core and F(0) containing the membrane proton channel, linked together by a central stalk and a peripheral stalk. During catalysis, ATP synthesis in the catalytic domain of F(1) is coupled via a rotary mechanism of the central stalk subunits to proton translocation. This protein is part of the stalk that links CF(0) to CF(1). It either transmits conformational changes from CF(0) to CF(1) or is implicated in proton conduction. In Rhizobium johnstonii (strain DSM 114642 / LMG 32736 / 3841) (Rhizobium leguminosarum bv. viciae), this protein is ATP synthase subunit delta.